We begin with the raw amino-acid sequence, 150 residues long: Troponin C, isoform 2B (150 aa).

At methionine 1 the chain carries N-acetylmethionine. 4 consecutive EF-hand domains span residues 7 to 42 (EQLS…MGVK), 43 to 78 (ISEK…FLIE), 83 to 118 (ALKA…LDNR), and 119 to 150 (LTEE…MMNG). Aspartate 56, aspartate 58, serine 60, glutamate 62, and glutamate 67 together coordinate Ca(2+). The Ca(2+) site is built by aspartate 132, aspartate 134, serine 136, threonine 138, and glutamate 143.

The protein belongs to the troponin C family.

In terms of biological role, troponin is the central regulatory protein of striated muscle contraction. Tn consists of three components: Tn-I which is the inhibitor of actomyosin ATPase, Tn-T which contains the binding site for tropomyosin and Tn-C. The binding of calcium to Tn-C abolishes the inhibitory action of Tn on actin filaments. This is Troponin C, isoform 2B from Homarus americanus (American lobster).